Here is a 136-residue protein sequence, read N- to C-terminus: Large ribosomal subunit protein uL16 (136 aa).

This sequence belongs to the universal ribosomal protein uL16 family. Part of the 50S ribosomal subunit.

In terms of biological role, binds 23S rRNA and is also seen to make contacts with the A and possibly P site tRNAs. The chain is Large ribosomal subunit protein uL16 from Hamiltonella defensa subsp. Acyrthosiphon pisum (strain 5AT).